The primary structure comprises 337 residues: Cytoskeleton protein RodZ (337 aa).

The Cytoplasmic segment spans residues 1 to 111 (MNTEATHDQN…LGKRRKKRDG (111 aa)). Positions 19 to 71 (LRNAREQLGLSQQAVAERLCLKVSTVRDIEEDKAPADLASTFLRGYIRSYARL) constitute an HTH cro/C1-type domain. Positions 30-49 (QQAVAERLCLKVSTVRDIEE) form a DNA-binding region, H-T-H motif. A helical; Signal-anchor for type II membrane protein transmembrane segment spans residues 112–132 (WLMTFTWLVLFVVIGLSGAWW). Over 133-337 (WQDHKAQQEE…TLNAEQSPAQ (205 aa)) the chain is Periplasmic. Over residues 145–167 (TMADQSSAELSSNSEQGQSVPLN) the composition is skewed to polar residues. The interval 145-220 (TMADQSSAEL…VSPSQANVDT (76 aa)) is disordered. The segment covering 168 to 207 (TSTTTDPATTSTPPASVDTTATNTQTPAVTAPAPAVDPQQ) has biased composition (low complexity). The span at 208–218 (NAVVSPSQANV) shows a compositional bias: polar residues.

The protein belongs to the RodZ family.

Its subcellular location is the cell inner membrane. Cytoskeletal protein that is involved in cell-shape control through regulation of the length of the long axis. The polypeptide is Cytoskeleton protein RodZ (Escherichia coli O17:K52:H18 (strain UMN026 / ExPEC)).